The chain runs to 54 residues: UPF0391 membrane protein BMEI0373 (54 aa).

2 helical membrane passes run 5 to 25 (VLVFLVVALVAGALGFGGIAG) and 29 to 48 (GIAQILFFFFLALLVISLIA).

It belongs to the UPF0391 family.

It is found in the cell membrane. This is UPF0391 membrane protein BMEI0373 from Brucella melitensis biotype 1 (strain ATCC 23456 / CCUG 17765 / NCTC 10094 / 16M).